Reading from the N-terminus, the 198-residue chain is Urease accessory protein UreE (198 aa).

Positions 137–198 are disordered; sequence ARGAYHSPGG…RGHDHDHKHD (62 aa). Basic and acidic residues predominate over residues 149–198; it reads HGHDHDHNHDHGHDHAHDHNHGHDHDHEHGYEHEHEHRHDRGHDHDHKHD.

Belongs to the UreE family.

The protein localises to the cytoplasm. Functionally, involved in urease metallocenter assembly. Binds nickel. Probably functions as a nickel donor during metallocenter assembly. This Rhizobium johnstonii (strain DSM 114642 / LMG 32736 / 3841) (Rhizobium leguminosarum bv. viciae) protein is Urease accessory protein UreE.